Here is a 144-residue protein sequence, read N- to C-terminus: Ethylene-responsive transcription factor ERF019 (144 aa).

A DNA-binding region (AP2/ERF) is located at residues Lys13–Pro72.

The protein belongs to the AP2/ERF transcription factor family. ERF subfamily.

The protein resides in the nucleus. Probably acts as a transcriptional activator. Binds to the GCC-box pathogenesis-related promoter element. May be involved in the regulation of gene expression by stress factors and by components of stress signal transduction pathways. This is Ethylene-responsive transcription factor ERF019 (ERF019) from Arabidopsis thaliana (Mouse-ear cress).